We begin with the raw amino-acid sequence, 542 residues long: Protein XP55 (542 aa).

An N-terminal signal peptide occupies residues 1-33 (MTARRTRWTRRTDRSLPIRSAAAAVAFAAGATA). The N-palmitoyl cysteine moiety is linked to residue cysteine 34. Cysteine 34 carries the S-diacylglycerol cysteine lipid modification. Positions 519–542 (LEGRTNTASPAGPGGTSRTGGRKK) are disordered.

Belongs to the bacterial solute-binding protein 5 family.

It localises to the cell membrane. Its function is as follows. Required for transport of an unidentified substrate. The polypeptide is Protein XP55 (xp55) (Streptomyces lividans).